The sequence spans 198 residues: Holliday junction branch migration complex subunit RuvA (198 aa).

The domain I stretch occupies residues 1–64 (MYEYIKGKYI…EDFIGLYGFD (64 aa)). The segment at 65–143 (SKEELEMFKL…PDELVDSSLE (79 aa)) is domain II. Residues 144 to 149 (IDTKDN) form a flexible linker region. Positions 150 to 198 (ENVMALSEALSALIALGYSEKEAESVLKKIDKNDSVENIIKNALKALMG) are domain III.

The protein belongs to the RuvA family. In terms of assembly, homotetramer. Forms an RuvA(8)-RuvB(12)-Holliday junction (HJ) complex. HJ DNA is sandwiched between 2 RuvA tetramers; dsDNA enters through RuvA and exits via RuvB. An RuvB hexamer assembles on each DNA strand where it exits the tetramer. Each RuvB hexamer is contacted by two RuvA subunits (via domain III) on 2 adjacent RuvB subunits; this complex drives branch migration. In the full resolvosome a probable DNA-RuvA(4)-RuvB(12)-RuvC(2) complex forms which resolves the HJ.

It localises to the cytoplasm. In terms of biological role, the RuvA-RuvB-RuvC complex processes Holliday junction (HJ) DNA during genetic recombination and DNA repair, while the RuvA-RuvB complex plays an important role in the rescue of blocked DNA replication forks via replication fork reversal (RFR). RuvA specifically binds to HJ cruciform DNA, conferring on it an open structure. The RuvB hexamer acts as an ATP-dependent pump, pulling dsDNA into and through the RuvAB complex. HJ branch migration allows RuvC to scan DNA until it finds its consensus sequence, where it cleaves and resolves the cruciform DNA. The chain is Holliday junction branch migration complex subunit RuvA from Clostridium beijerinckii (strain ATCC 51743 / NCIMB 8052) (Clostridium acetobutylicum).